The following is a 385-amino-acid chain: Cotranscriptional regulator ARB2A homolog (385 aa).

Disordered regions lie at residues 1–65 (MSDI…NGEE) and 220–239 (EEQK…NGKL). Low complexity predominate over residues 52–62 (NNNNNNSNNSN). The segment covering 220–238 (EEQKEKAKEEEEKKDDNGK) has biased composition (basic and acidic residues).

It belongs to the ARB2A family.

The chain is Cotranscriptional regulator ARB2A homolog from Dictyostelium discoideum (Social amoeba).